The primary structure comprises 685 residues: Mannan-binding lectin serine protease 2 (685 aa).

A signal peptide spans 1 to 19 (MRLLIVLGLLWSLVATLLG). Residues 20–137 (SKWPEPVFGR…TGFEAFYAAE (118 aa)) enclose the CUB 1 domain. Glutamate 67 and aspartate 75 together coordinate Ca(2+). The cysteines at positions 72 and 90 are disulfide-linked. Asparagine 103 carries N-linked (GlcNAc...) asparagine glycosylation. Residues aspartate 120, serine 122, asparagine 123, aspartate 138, and valine 139 each coordinate Ca(2+). In terms of domain architecture, EGF-like; calcium-binding spans 138 to 181 (DVDECRTSLGDSVPCDHYCHNYLGGYYCSCRVGYILHQNKHTCS). Intrachain disulfides connect cysteine 152-cysteine 165, cysteine 167-cysteine 180, cysteine 184-cysteine 211, and cysteine 241-cysteine 259. Asparagine 158 bears the (3R)-3-hydroxyasparagine mark. Residues tyrosine 159 and glycine 162 each contribute to the Ca(2+) site. The CUB 2 domain occupies 184–296 (CSGQVFTGRS…TGWKIHYTST (113 aa)). A glycan (N-linked (GlcNAc...) asparagine) is linked at asparagine 285. Sushi domains lie at 298–363 (QPCP…ECSI) and 364–431 (IDCG…VCKP). Intrachain disulfides connect cysteine 300–cysteine 348, cysteine 328–cysteine 361, cysteine 366–cysteine 411, cysteine 396–cysteine 429, cysteine 433–cysteine 551, cysteine 597–cysteine 617, and cysteine 628–cysteine 659. The Peptidase S1 domain maps to 444-683 (IIGGQPAKPG…YIPWIENIIN (240 aa)). Active-site charge relay system residues include histidine 482 and aspartate 531. Catalysis depends on serine 632, which acts as the Charge relay system. N-linked (GlcNAc...) asparagine glycosylation occurs at asparagine 641.

It belongs to the peptidase S1 family. As to quaternary structure, homodimer; disulfide-linked. Binds MBL2. Isoform 2 binds to MASP1. Binds SERPING1. N-glycosylated. In terms of processing, the iron and 2-oxoglutarate dependent 3-hydroxylation of aspartate and asparagine is (R) stereospecific within EGF domains. In terms of tissue distribution, highly expressed in liver. Secreted in plasma.

The protein resides in the secreted. It carries out the reaction Selective cleavage after Arg-223 in complement component C2 (-Ser-Leu-Gly-Arg-|-Lys-Ile-Gln-Ile) and after Arg-76 in complement component C4 (-Gly-Leu-Gln-Arg-|-Ala-Leu-Glu-Ile).. Its function is as follows. Serum protease that plays an important role in the activation of the complement system via mannose-binding lectin. After activation by auto-catalytic cleavage it cleaves C2 and C4, leading to their activation and to the formation of C3 convertase. In Rattus norvegicus (Rat), this protein is Mannan-binding lectin serine protease 2 (Masp2).